The primary structure comprises 353 residues: Tetraacyldisaccharide 4'-kinase (353 aa).

66–73 (TVGGTGKT) is an ATP binding site.

It belongs to the LpxK family.

It catalyses the reaction a lipid A disaccharide + ATP = a lipid IVA + ADP + H(+). It participates in glycolipid biosynthesis; lipid IV(A) biosynthesis; lipid IV(A) from (3R)-3-hydroxytetradecanoyl-[acyl-carrier-protein] and UDP-N-acetyl-alpha-D-glucosamine: step 6/6. Its function is as follows. Transfers the gamma-phosphate of ATP to the 4'-position of a tetraacyldisaccharide 1-phosphate intermediate (termed DS-1-P) to form tetraacyldisaccharide 1,4'-bis-phosphate (lipid IVA). The sequence is that of Tetraacyldisaccharide 4'-kinase from Geobacter sulfurreducens (strain ATCC 51573 / DSM 12127 / PCA).